Here is a 448-residue protein sequence, read N- to C-terminus: Tumor necrosis factor receptor superfamily member EDAR (448 aa).

The N-terminal stretch at methionine 1–alanine 26 is a signal peptide. The Extracellular segment spans residues glutamate 27–alanine 187. 3 TNFR-Cys repeats span residues asparagine 30–cysteine 71, proline 73–cysteine 113, and proline 115–cysteine 148. Intrachain disulfides connect cysteine 31-cysteine 44, cysteine 47-cysteine 60, cysteine 50-cysteine 71, cysteine 74-cysteine 87, cysteine 93-cysteine 113, and cysteine 135-cysteine 148. N-linked (GlcNAc...) asparagine glycosylation is present at asparagine 38. Residues leucine 188 to phenylalanine 208 form a helical membrane-spanning segment. Residues tyrosine 209 to serine 448 lie on the Cytoplasmic side of the membrane. Residues cysteine 220–serine 297 form a disordered region. The segment covering valine 233–proline 243 has biased composition (basic and acidic residues). The span at aspartate 271 to serine 283 shows a compositional bias: polar residues. Residues arginine 358–isoleucine 431 enclose the Death domain.

In terms of assembly, binds to EDARADD. Associates with TRAF1, TRAF2, TRAF3 and NIK. In terms of tissue distribution, detected in fetal kidney, lung, skin and cultured neonatal epidermal keratinocytes. Not detected in lymphoblast and fibroblast cell lines.

The protein localises to the membrane. Functionally, receptor for EDA isoform A1, but not for EDA isoform A2. Mediates the activation of NF-kappa-B and JNK. May promote caspase-independent cell death. In Homo sapiens (Human), this protein is Tumor necrosis factor receptor superfamily member EDAR (EDAR).